The following is a 339-amino-acid chain: Fructose-1,6-bisphosphatase class 1 (339 aa).

Mg(2+) is bound by residues glutamate 91, aspartate 113, leucine 115, and aspartate 116. Residues 116-119, asparagine 208, and lysine 274 each bind substrate; that span reads DGSS. A Mg(2+)-binding site is contributed by glutamate 280.

It belongs to the FBPase class 1 family. Homotetramer. Mg(2+) serves as cofactor.

The protein resides in the cytoplasm. It catalyses the reaction beta-D-fructose 1,6-bisphosphate + H2O = beta-D-fructose 6-phosphate + phosphate. It functions in the pathway carbohydrate biosynthesis; gluconeogenesis. In Cupriavidus pinatubonensis (strain JMP 134 / LMG 1197) (Cupriavidus necator (strain JMP 134)), this protein is Fructose-1,6-bisphosphatase class 1.